Consider the following 344-residue polypeptide: 3,4-dihydroxy-2-butanone 4-phosphate synthase (344 aa).

The DHBP synthase stretch occupies residues 1–202 (MILRRVTEAL…VSDLISYRLE (202 aa)). D-ribulose 5-phosphate-binding positions include 27 to 28 (RE), Asp32, 139 to 143 (RTGHT), and Glu163. Mg(2+) is bound at residue Glu28. Residue His142 coordinates Mg(2+). The tract at residues 203–344 (NESLLKMFCQ…GLKLVETISL (142 aa)) is GTP cyclohydrolase II-like.

The protein in the N-terminal section; belongs to the DHBP synthase family. It in the C-terminal section; belongs to the GTP cyclohydrolase II family. Requires Mg(2+) as cofactor. The cofactor is Mn(2+).

It catalyses the reaction D-ribulose 5-phosphate = (2S)-2-hydroxy-3-oxobutyl phosphate + formate + H(+). Its pathway is cofactor biosynthesis; riboflavin biosynthesis; 2-hydroxy-3-oxobutyl phosphate from D-ribulose 5-phosphate: step 1/1. Its function is as follows. Catalyzes the conversion of D-ribulose 5-phosphate to formate and 3,4-dihydroxy-2-butanone 4-phosphate. This Helicobacter pylori (strain J99 / ATCC 700824) (Campylobacter pylori J99) protein is 3,4-dihydroxy-2-butanone 4-phosphate synthase (ribB).